We begin with the raw amino-acid sequence, 808 residues long: Sucrose synthase (808 aa).

Positions 271–753 are GT-B glycosyltransferase; the sequence is MLFRIALISP…GIERVYSTYT (483 aa).

Belongs to the glycosyltransferase 1 family. Probably a homotetramer.

It catalyses the reaction an NDP-alpha-D-glucose + D-fructose = a ribonucleoside 5'-diphosphate + sucrose + H(+). The enzyme catalyses ADP-alpha-D-glucose + D-fructose = sucrose + ADP + H(+). Catalyzes the reversible conversion of sucrose and a nucleotide disphosphate (NDP) into fructose and NDP-glucose; although the reaction is freely reversible in vitro, the physiological reaction seems to be sucrose cleavage. Unlike characterized plant enzymes prefers ADP as a cosubstrate, whereas plants prefer UDP. Its preference for ADP over UDP suggests it may directly link sucrose and glycogen metabolism. The sequence is that of Sucrose synthase from Thermosynechococcus vestitus (strain NIES-2133 / IAM M-273 / BP-1).